Reading from the N-terminus, the 785-residue chain is Protein translocase subunit SecA 3 (785 aa).

Residues glutamine 98, 116–120 (GEGKT), and aspartate 505 each bind ATP.

This sequence belongs to the SecA family. In terms of assembly, monomer and homodimer. Part of the essential Sec protein translocation apparatus which comprises SecA, SecYEG and auxiliary proteins SecDF. Other proteins may also be involved.

Its subcellular location is the cell membrane. The protein localises to the cytoplasm. The enzyme catalyses ATP + H2O + cellular proteinSide 1 = ADP + phosphate + cellular proteinSide 2.. In terms of biological role, part of the Sec protein translocase complex. Interacts with the SecYEG preprotein conducting channel. Has a central role in coupling the hydrolysis of ATP to the transfer of proteins into and across the cell membrane, serving as an ATP-driven molecular motor driving the stepwise translocation of polypeptide chains across the membrane. The polypeptide is Protein translocase subunit SecA 3 (Mycolicibacterium vanbaalenii (strain DSM 7251 / JCM 13017 / BCRC 16820 / KCTC 9966 / NRRL B-24157 / PYR-1) (Mycobacterium vanbaalenii)).